The primary structure comprises 901 residues: Serine/threonine-protein kinase-like protein CR4 (901 aa).

A signal peptide spans 1–22 (MDIVPVVALCCCLVLLPSWAYG). Tandem repeats lie at residues 31 to 66 (VSYGEDGPVFCGLNSDGSHLVTCFGADASVVYGAPS), 70 to 105 (FVGVTAGDGFACGLLLDTNQPYCWGSNSYVKIGVPQ), 123 to 158 (LCALRTSVKGFHSVNGDTSVIDCWGYNMTATHTVTG), 160 to 193 (VSAISAGSVFNCGLFARNRTVFCWGDESVSGVIG), 201 to 234 (FQSIGAGGYHVCGVLENAQVFCWGRSLEMQQMST), 251 to 285 (MVSVVGGRFHACGIRSLDHQVACWGFTLQNSTLAP), and 290 to 328 (VYAIVAGDYFTCGVPAETSLKPMCWGHSGPLALPMAVSP). Residues 31-328 (VSYGEDGPVF…PLALPMAVSP (298 aa)) are 7 X 36 AA repeats. N-linked (GlcNAc...) asparagine glycosylation is found at asparagine 149 and asparagine 177. Residue asparagine 280 is glycosylated (N-linked (GlcNAc...) asparagine). A TNFR-Cys repeat occupies 335-389 (SCSHGYYEYANHGEVGSGSKTCKPANSRLCLPCSVGCPDDSYESSPCNATADRVC). Intrachain disulfides connect cysteine 336–cysteine 364, cysteine 367–cysteine 381, and cysteine 371–cysteine 389. Residue asparagine 382 is glycosylated (N-linked (GlcNAc...) asparagine). Residues 423–443 (IFVAEIAFAVILVFSVTAIAC) traverse the membrane as a helical segment. The 278-residue stretch at 504 to 781 (FSEDSQVGKG…KVTTALERAL (278 aa)) folds into the Protein kinase domain. Residues 510–518 (VGKGSFSCV) and lysine 532 contribute to the ATP site. Catalysis depends on aspartate 633, which acts as the Proton acceptor. Residues 845 to 901 (VTSSQRRKSSASEADMDGRTTTDGRNVGSSIGDGLRSLEEEISPASPQENLYLQHNF) are disordered. Residues 889–901 (ASPQENLYLQHNF) are compositionally biased toward polar residues.

It belongs to the protein kinase superfamily. Ser/Thr protein kinase family. In terms of assembly, homodimer. Post-translationally, autophosphorylated. In terms of tissue distribution, specifically expressed in the epidermal cells of paleas and lemmas.

The protein localises to the cell membrane. The protein resides in the endosome. It localises to the multivesicular body membrane. It catalyses the reaction L-seryl-[protein] + ATP = O-phospho-L-seryl-[protein] + ADP + H(+). It carries out the reaction L-threonyl-[protein] + ATP = O-phospho-L-threonyl-[protein] + ADP + H(+). Receptor protein kinase. Could play a role in a differentiation signal. Controls formative cell division in meristems. Regulates epidermal cell differentiation in many organs. During floral organogenesis, required to maintain the interlocking of the palea and lemma, and fertility. Triggers culm elongation. This chain is Serine/threonine-protein kinase-like protein CR4, found in Oryza sativa subsp. japonica (Rice).